The following is a 314-amino-acid chain: Cathepsin L 1 (314 aa).

Residues 1 to 24 (MMLLGASLYLNNTQEVSDEIDTAN) form the signal peptide. The propeptide at 25–109 (LYANWKMKYN…NAANSNFQYK (85 aa)) is activation peptide. 3 disulfides stabilise this stretch: Cys-132/Cys-175, Cys-166/Cys-207, and Cys-259/Cys-302. The active site involves Cys-135. Residues His-265 and Asn-282 contribute to the active site.

It belongs to the peptidase C1 family.

It localises to the secreted. It catalyses the reaction Specificity close to that of papain. As compared to cathepsin B, cathepsin L exhibits higher activity toward protein substrates, but has little activity on Z-Arg-Arg-NHMec, and no peptidyl-dipeptidase activity.. In terms of biological role, may be involved in extracellular digestion. This is Cathepsin L 1 from Paramecium tetraurelia.